Reading from the N-terminus, the 606-residue chain is Transmembrane 9 superfamily member 1 (606 aa).

Positions 1–27 (MTVVGNPRSWSCRWLPILILLLGTGHG) are cleaved as a signal peptide. The N-linked (GlcNAc...) asparagine glycan is linked to Asn-178. 4 helical membrane-spanning segments follow: residues 237-257 (LSIINSMVLVFLLVGFVAVIL), 310-330 (VLGVGAQFLALGTGIIVMALL), 339-359 (GAINSAAILLYALTCCISGYV), and 373-393 (VWNIILTTSLFSVPFFLTWSV). An N-linked (GlcNAc...) asparagine glycan is attached at Asn-401. Helical transmembrane passes span 412–432 (ILLLLTVWLLVGFPLTVIGGI), 469–489 (VGGFLPFSAISVELYYIFATV), 499–519 (GILFFVFAILLSVGACISIAL), and 535–555 (SVLSVGSTGLFIFLYSVFYYA). An N-linked (GlcNAc...) asparagine glycan is attached at Asn-559. The helical transmembrane segment at 570–590 (FGYSLLTGYVFFLMLGTISFF) threads the bilayer.

The protein belongs to the nonaspanin (TM9SF) (TC 9.A.2) family.

It is found in the lysosome membrane. It localises to the cytoplasmic vesicle. The protein localises to the autophagosome membrane. Its function is as follows. Plays an essential role in autophagy. In Pongo abelii (Sumatran orangutan), this protein is Transmembrane 9 superfamily member 1 (TM9SF1).